Reading from the N-terminus, the 130-residue chain is Protein ApaG (130 aa).

The ApaG domain maps to 3 to 127; the sequence is SAVTRGIEVT…FSLDVPEQRR (125 aa).

The protein is Protein ApaG of Brucella abortus (strain S19).